The sequence spans 554 residues: Eukaryotic translation initiation factor 3 subunit D-2 (554 aa).

The interval 291-305 is RNA gate; it reads QFDLLTVNETALEPP. Residues 530-554 are disordered; sequence NAFDSDGNEDEETSEDRPFLKSMAN.

It belongs to the eIF-3 subunit D family. Component of the eukaryotic translation initiation factor 3 (eIF-3) complex. The eIF-3 complex interacts with pix.

It localises to the cytoplasm. Its function is as follows. mRNA cap-binding component of the eukaryotic translation initiation factor 3 (eIF-3) complex, which is involved in protein synthesis of a specialized repertoire of mRNAs and, together with other initiation factors, stimulates binding of mRNA and methionyl-tRNAi to the 40S ribosome. The eIF-3 complex specifically targets and initiates translation of a subset of mRNAs involved in cell proliferation. In the eIF-3 complex, eif3d specifically recognizes and binds the 7-methylguanosine cap of a subset of mRNAs. This chain is Eukaryotic translation initiation factor 3 subunit D-2, found in Drosophila mojavensis (Fruit fly).